Here is a 262-residue protein sequence, read N- to C-terminus: Adenosylcobinamide-GDP ribazoletransferase (262 aa).

Transmembrane regions (helical) follow at residues 43-63 (YFGL…WLTQ), 66-86 (LPAG…TGGF), 120-140 (GALA…ELAL), 146-166 (AGSA…SLIF), 191-211 (LFIL…IAAL), and 242-262 (AAQQ…GGIL).

The protein belongs to the CobS family. It depends on Mg(2+) as a cofactor.

It localises to the cell inner membrane. The catalysed reaction is alpha-ribazole + adenosylcob(III)inamide-GDP = adenosylcob(III)alamin + GMP + H(+). The enzyme catalyses alpha-ribazole 5'-phosphate + adenosylcob(III)inamide-GDP = adenosylcob(III)alamin 5'-phosphate + GMP + H(+). It participates in cofactor biosynthesis; adenosylcobalamin biosynthesis; adenosylcobalamin from cob(II)yrinate a,c-diamide: step 7/7. Functionally, joins adenosylcobinamide-GDP and alpha-ribazole to generate adenosylcobalamin (Ado-cobalamin). Also synthesizes adenosylcobalamin 5'-phosphate from adenosylcobinamide-GDP and alpha-ribazole 5'-phosphate. The sequence is that of Adenosylcobinamide-GDP ribazoletransferase from Shewanella oneidensis (strain ATCC 700550 / JCM 31522 / CIP 106686 / LMG 19005 / NCIMB 14063 / MR-1).